The chain runs to 641 residues: Toxin TseL (641 aa).

As to quaternary structure, interacts with VgrG3; this interaction allows TseL secretion to target cells.

The protein resides in the secreted. Functionally, toxin secreted by the type VI (T6SS) secretion system that acts on prokaryotic as well as eukaryotic target cells. This Vibrio cholerae serotype O1 (strain ATCC 39315 / El Tor Inaba N16961) protein is Toxin TseL.